The chain runs to 166 residues: Large ribosomal subunit protein uL10 (166 aa).

This sequence belongs to the universal ribosomal protein uL10 family. As to quaternary structure, part of the ribosomal stalk of the 50S ribosomal subunit. The N-terminus interacts with L11 and the large rRNA to form the base of the stalk. The C-terminus forms an elongated spine to which L12 dimers bind in a sequential fashion forming a multimeric L10(L12)X complex.

Forms part of the ribosomal stalk, playing a central role in the interaction of the ribosome with GTP-bound translation factors. This is Large ribosomal subunit protein uL10 from Staphylococcus carnosus (strain TM300).